Reading from the N-terminus, the 204-residue chain is V-set and transmembrane domain-containing protein 2-like protein (204 aa).

The signal sequence occupies residues 1-24; the sequence is MGAPLAVALGALHYLALFLQLGGA. Residues 41–158 form the Ig-like domain; the sequence is ALFTETPHDM…DGKARHHKVK (118 aa). An intrachain disulfide couples Cys-62 to Cys-142. The segment at 168 to 204 is disordered; it reads NSVLHLPEAPPAAPAPPPPKPGKELRKRSVDQEACSL. Pro residues predominate over residues 175–187; the sequence is EAPPAAPAPPPPK. The segment covering 188–198 has biased composition (basic and acidic residues); sequence PGKELRKRSVD.

The polypeptide is V-set and transmembrane domain-containing protein 2-like protein (VSTM2L) (Homo sapiens (Human)).